The chain runs to 303 residues: Trans-aconitate 2-methyltransferase (303 aa).

The segment at 271-303 is disordered; sequence EGSGGSGGSGGSAGSAGCAGSGGSVGPAGEAGR. Residues 272 to 303 are compositionally biased toward gly residues; the sequence is GSGGSGGSGGSAGSAGCAGSGGSVGPAGEAGR.

The protein belongs to the methyltransferase superfamily. Tam family.

The protein localises to the cytoplasm. It carries out the reaction trans-aconitate + S-adenosyl-L-methionine = (E)-3-(methoxycarbonyl)pent-2-enedioate + S-adenosyl-L-homocysteine. Its function is as follows. Catalyzes the S-adenosylmethionine monomethyl esterification of trans-aconitate. In Streptomyces coelicolor (strain ATCC BAA-471 / A3(2) / M145), this protein is Trans-aconitate 2-methyltransferase.